Here is a 1011-residue protein sequence, read N- to C-terminus: Protein translocase subunit SecA (1011 aa).

Residues Gln-87, 105–109 (GEGKT), and Asp-500 each bind ATP. The disordered stretch occupies residues 969–1011 (SLPLGANPAPARPQPAVMQEQECPCGSGKPFNKCHGGEDEATA). 4 residues coordinate Zn(2+): Cys-991, Cys-993, Cys-1002, and His-1003.

The protein belongs to the SecA family. Monomer and homodimer. Part of the essential Sec protein translocation apparatus which comprises SecA, SecYEG and auxiliary proteins SecDF-YajC and YidC. It depends on Zn(2+) as a cofactor.

The protein localises to the cell inner membrane. The protein resides in the cytoplasm. It carries out the reaction ATP + H2O + cellular proteinSide 1 = ADP + phosphate + cellular proteinSide 2.. Its function is as follows. Part of the Sec protein translocase complex. Interacts with the SecYEG preprotein conducting channel. Has a central role in coupling the hydrolysis of ATP to the transfer of proteins into and across the cell membrane, serving as an ATP-driven molecular motor driving the stepwise translocation of polypeptide chains across the membrane. The chain is Protein translocase subunit SecA from Sorangium cellulosum (strain So ce56) (Polyangium cellulosum (strain So ce56)).